A 122-amino-acid polypeptide reads, in one-letter code: Large ribosomal subunit protein uL14 (122 aa).

This sequence belongs to the universal ribosomal protein uL14 family. In terms of assembly, part of the 50S ribosomal subunit. Forms a cluster with proteins L3 and L19. In the 70S ribosome, L14 and L19 interact and together make contacts with the 16S rRNA in bridges B5 and B8.

Its function is as follows. Binds to 23S rRNA. Forms part of two intersubunit bridges in the 70S ribosome. This Marinomonas sp. (strain MWYL1) protein is Large ribosomal subunit protein uL14.